A 185-amino-acid chain; its full sequence is Ribosome-recycling factor (185 aa).

Belongs to the RRF family.

It localises to the cytoplasm. In terms of biological role, responsible for the release of ribosomes from messenger RNA at the termination of protein biosynthesis. May increase the efficiency of translation by recycling ribosomes from one round of translation to another. The polypeptide is Ribosome-recycling factor (Clostridium perfringens (strain ATCC 13124 / DSM 756 / JCM 1290 / NCIMB 6125 / NCTC 8237 / Type A)).